Consider the following 1337-residue polypeptide: ABC transporter D family member 1 (1337 aa).

4 helical membrane passes run 24–44 (ILLA…KSRV), 142–162 (APLF…LSTL), 247–267 (YASP…GTAI), and 342–362 (FLLK…PFFS). The ABC transmembrane type-1 1 domain maps to 117 to 395 (VFRTALSNRL…SVIISLFQAL (279 aa)). The 248-residue stretch at 448–695 (VEFSDVKVVT…DAMVVQRAFA (248 aa)) folds into the ABC transporter 1 domain. 481 to 488 (GPNGSGKS) contributes to the ATP binding site. Positions 751–1049 (LIPTIFDKQG…VVSQSFMAFG (299 aa)) constitute an ABC transmembrane type-1 2 domain. A helical transmembrane segment spans residues 900–920 (LLTGQRGVAILYTYMLLGLGF). Residues 1091–1337 (LDSQDLLSFS…ELRSIEQTTE (247 aa)) form the ABC transporter 2 domain. 1130–1137 (GPNGSGKT) is an ATP binding site.

The protein belongs to the ABC transporter superfamily. ABCD family. Peroxisomal fatty acyl CoA transporter (TC 3.A.1.203) subfamily.

The protein localises to the peroxisome membrane. The protein resides in the glyoxysome membrane. The catalysed reaction is an acyl-CoA(out) + ATP + H2O = an acyl-CoA(in) + ADP + phosphate + H(+). In terms of biological role, contributes to the transport of fatty acids and their derivatives (acyl CoAs) across the peroxisomal membrane. Provides acetate to the glyoxylate cycle in developing seedlings. Involved in pollen tube elongation, ovule fertilization, and seeds germination after imbibition (controls the switch between the opposing developmental programs of dormancy and germination), probably by promoting beta-oxidation of storage lipids during gluconeogenesis. Required for biosynthesis of jasmonic acid and conversion of indole butyric acid to indole acetic acid. Confers sensitivity to monofluoroacetic acid (FAc), a toxic acetate analog, and to 2,4-dichlorophenoxybutyric acid (2,4-DB) and indole-3-butyric acid (IBA), two precursors of auxin after beta-oxidation. The chain is ABC transporter D family member 1 from Arabidopsis thaliana (Mouse-ear cress).